Here is a 90-residue protein sequence, read N- to C-terminus: Putative defensin-like protein 168 (90 aa).

Positions 1–27 are cleaved as a signal peptide; sequence MKYFTLFMISYIFISIFVFSHIHDVEA. Disulfide bonds link Cys-32/Cys-90, Cys-43/Cys-66, Cys-51/Cys-84, and Cys-64/Cys-86.

This sequence belongs to the DEFL family.

It is found in the secreted. This Arabidopsis thaliana (Mouse-ear cress) protein is Putative defensin-like protein 168.